Consider the following 151-residue polypeptide: uncharacterized protein (151 aa).

The KilA-N domain occupies 11–118; it reads NFCKLSYEDI…LKVVKFINSY (108 aa).

This is an uncharacterized protein from Fowlpox virus (strain NVSL) (FPV).